Reading from the N-terminus, the 369-residue chain is Flagellar P-ring protein (369 aa).

The first 23 residues, 1 to 23, serve as a signal peptide directing secretion; sequence MRSLLRWMGVLLLCGLCAAPAQA.

This sequence belongs to the FlgI family. The basal body constitutes a major portion of the flagellar organelle and consists of four rings (L,P,S, and M) mounted on a central rod.

It localises to the periplasm. It is found in the bacterial flagellum basal body. In terms of biological role, assembles around the rod to form the L-ring and probably protects the motor/basal body from shearing forces during rotation. The protein is Flagellar P-ring protein of Chromohalobacter salexigens (strain ATCC BAA-138 / DSM 3043 / CIP 106854 / NCIMB 13768 / 1H11).